Consider the following 399-residue polypeptide: Elongation factor Tu (399 aa).

One can recognise a tr-type G domain in the interval 10–207 (KPHVNVGTIG…ALDSYIPEPV (198 aa)). The tract at residues 19–26 (GHIDHGKT) is G1. 19-26 (GHIDHGKT) is a binding site for GTP. T26 provides a ligand contact to Mg(2+). Residues 60–64 (GITIN) are G2. The interval 81–84 (DCPG) is G3. GTP contacts are provided by residues 81–85 (DCPGH) and 136–139 (NKVD). The G4 stretch occupies residues 136 to 139 (NKVD). Residues 174 to 176 (SAL) are G5.

This sequence belongs to the TRAFAC class translation factor GTPase superfamily. Classic translation factor GTPase family. EF-Tu/EF-1A subfamily. In terms of assembly, monomer.

It is found in the cytoplasm. It carries out the reaction GTP + H2O = GDP + phosphate + H(+). Its function is as follows. GTP hydrolase that promotes the GTP-dependent binding of aminoacyl-tRNA to the A-site of ribosomes during protein biosynthesis. The polypeptide is Elongation factor Tu (Pseudothermotoga lettingae (strain ATCC BAA-301 / DSM 14385 / NBRC 107922 / TMO) (Thermotoga lettingae)).